The primary structure comprises 741 residues: Mitofusin-1 (741 aa).

Topologically, residues 1–584 are cytoplasmic; sequence MAETVSPLKH…AAQEELMITL (584 aa). The part of a helix bundle domain, formed by helices from N-terminal and C-terminal regions stretch occupies residues 9 to 73; the sequence is KHFVLAKKAI…LAVIGEVLSR (65 aa). In terms of domain architecture, Dynamin-type G spans 72 to 321; it reads SRRHMKVAFF…ARLQEFQNFE (250 aa). Positions 82–89 are G1 motif; that stretch reads GRTSSGKS. 85–90 contributes to the GTP binding site; it reads SSGKSS. Residues 108–109 are G2 motif; that stretch reads TT. Residues 178-181 form a G3 motif region; sequence DSPG. 237–240 contacts GTP; sequence NRWD. A G4 motif region spans residues 237-240; that stretch reads NRWD. Position 266 (glutamate 266) is a region of interest, G5 motif. Residues serine 284 and lysine 286 each coordinate GTP. The tract at residues 338 to 364 is part of a helix bundle domain, formed by helices from N-terminal and C-terminal regions; sequence EQHTIRAKQILDTVKNILDSVNVAAAE. Residues 371–408 adopt a coiled-coil conformation; it reads EEREDQIDRLDFIRNQMNLLTLDVKKKIKEVTEEVANK. A helical membrane pass occupies residues 585–605; that stretch reads ITGLASLTSRTSMGIIVVGGV. The Mitochondrial intermembrane segment spans residues 606–608; that stretch reads IWK. The chain crosses the membrane as a helical span at residues 609-629; it reads TVGWKLISVTLSMYGALYLYE. The Cytoplasmic portion of the chain corresponds to 630–741; that stretch reads RLTWTTRAKE…QFLHPSSGES (112 aa). Residues 677–735 adopt a coiled-coil conformation; that stretch reads FARLCQQVDVTQKHLEEEIARLSKEIDQLEKIQNNSKLLRNKAVQLESELENFSKQFLH. Residues 703-734 form a part of a helix bundle domain, formed by helices from N-terminal and C-terminal regions region; that stretch reads DQLEKIQNNSKLLRNKAVQLESELENFSKQFL.

Belongs to the TRAFAC class dynamin-like GTPase superfamily. Dynamin/Fzo/YdjA family. Mitofusin subfamily. Homodimer, also in the absence of bound GTP. Forms higher oligomers in the presence of a transition state GTP analog. Forms homomultimers and heteromultimers with MFN2. Oligomerization is essential for mitochondrion fusion. Component of a high molecular weight multiprotein complex. Interacts with VAT1. Interacts with THG1L; THG1L probably functions as a guanyl-nucleotide exchange factor/GEF, activating MFN1. Post-translationally, ubiquitinated by MARCHF5. When mitochondria are depolarized and dysfunctional, it is ubiquitinated by a SCF (SKP1-CUL1-F-box protein) E3 ubiquitin-protein ligase complex that contains FBXO7 and PRKN. Ubiquitinated by non-degradative ubiquitin by PRKN, promoting mitochondrial fusion; deubiquitination by USP30 inhibits mitochondrial fusion. In terms of tissue distribution, detected in adult heart. Detected in embryos (at protein level). Widely expressed.

Its subcellular location is the mitochondrion outer membrane. It carries out the reaction GTP + H2O = GDP + phosphate + H(+). Mitochondrial outer membrane GTPase that mediates mitochondrial clustering and fusion. Membrane clustering requires GTPase activity. It may involve a major rearrangement of the coiled coil domains. Mitochondria are highly dynamic organelles, and their morphology is determined by the equilibrium between mitochondrial fusion and fission events. Overexpression induces the formation of mitochondrial networks (in vitro). Has low GTPase activity. This Mus musculus (Mouse) protein is Mitofusin-1 (Mfn1).